Here is a 759-residue protein sequence, read N- to C-terminus: Protein AKNAD1 (759 aa).

The disordered stretch occupies residues 169–246 (TDQLNPKKDG…HTEKASSGNR (78 aa)). A compositionally biased stretch (polar residues) spans 181–192 (SNKPGSPTMTEE). Residues 371–482 (QKISQGKQMC…EDVKDKVDES (112 aa)) are a coiled coil. Polar residues predominate over residues 484–496 (YTSAPSLPVSSPV). Disordered stretches follow at residues 484–543 (YTSA…QEAP), 634–654 (EKAP…FCSD), 678–723 (CRKE…PSLA), and 735–759 (PDTS…MKSQ). Low complexity predominate over residues 497–509 (TLDDLASTSSSLS). Over residues 639–654 (SDSTPNSDTGHSFCSD) the composition is skewed to polar residues. Basic and acidic residues predominate over residues 679-688 (RKEPPKEFHY). The segment covering 735–744 (PDTSKSSPTP) has biased composition (polar residues).

It belongs to the AKNA family.

In Macaca fascicularis (Crab-eating macaque), this protein is Protein AKNAD1 (AKNAD1).